Reading from the N-terminus, the 346-residue chain is SUMO-activating enzyme subunit 1 (346 aa).

Met-1 carries the N-acetylmethionine modification. Val-2 carries the N-acetylvaline; in SUMO-activating enzyme subunit 1, N-terminally processed modification. At Ser-12 the chain carries Phosphoserine. An N6-acetyllysine modification is found at Lys-198.

It belongs to the ubiquitin-activating E1 family. In terms of assembly, heterodimer of SAE1 and UBA2/SAE2. The heterodimer corresponds to the two domains that are encoded on a single polypeptide chain in ubiquitin-activating enzyme E1. Interacts with UBE2I.

It localises to the nucleus. It participates in protein modification; protein sumoylation. The heterodimer acts as an E1 ligase for SUMO1, SUMO2, SUMO3, and probably SUMO4. It mediates ATP-dependent activation of SUMO proteins followed by formation of a thioester bond between a SUMO protein and a conserved active site cysteine residue on UBA2/SAE2. The chain is SUMO-activating enzyme subunit 1 (SAE1) from Bos taurus (Bovine).